The primary structure comprises 702 residues: Phosphatase and actin regulator 4 (702 aa).

Disordered regions lie at residues Met1–Ser38, Gly82–Gly194, and Asn222–Ala363. An RPEL 1 repeat occupies Glu63–Pro88. Residues Gly106–Val120 show a composition bias toward polar residues. Residues Ser116, Ser118, Ser131, and Ser147 each carry the phosphoserine modification. The span at Ser147–Ala156 shows a compositional bias: polar residues. Pro residues predominate over residues Val163 to Arg173. Residues Thr233–Thr250 show a composition bias toward low complexity. 2 positions are modified to phosphoserine: Ser270 and Ser291. Residues Pro301–Thr318 show a composition bias toward polar residues. Ser342 and Ser344 each carry phosphoserine. Positions Ser342–Pro362 are enriched in pro residues. Thr358 carries the post-translational modification Phosphothreonine. Ser427 bears the Phosphoserine mark. Thr432 is modified (phosphothreonine). Phosphoserine is present on residues Ser443, Ser453, and Ser464. Residues Lys473–Ser536 form a disordered region. A compositionally biased stretch (low complexity) spans Pro486–Ser497. A compositionally biased stretch (acidic residues) spans Glu508–Ser518. Phosphoserine occurs at positions 514, 516, 557, and 590. RPEL repeat units lie at residues Asn583–Asn608 and Arg621–Glu646. Residues Arg592–Glu615 form a disordered region. Ser628 is subject to Phosphoserine.

Belongs to the phosphatase and actin regulator family. In terms of assembly, binds PPP1CA and actin.

The protein localises to the cytoplasm. It localises to the cell projection. Its subcellular location is the lamellipodium. Functionally, regulator of protein phosphatase 1 (PP1) required for neural tube and optic fissure closure, and enteric neural crest cell (ENCCs) migration during development. Acts as an activator of PP1 by interacting with PPP1CA and preventing phosphorylation of PPP1CA at 'Thr-320'. During neural tube closure, localizes to the ventral neural tube and activates PP1, leading to down-regulate cell proliferation within cranial neural tissue and the neural retina. Also acts as a regulator of migration of enteric neural crest cells (ENCCs) by activating PP1, leading to dephosphorylation and subsequent activation of cofilin (COF1 or COF2) and repression of the integrin signaling through the RHO/ROCK pathway. This chain is Phosphatase and actin regulator 4 (PHACTR4), found in Pongo abelii (Sumatran orangutan).